A 183-amino-acid polypeptide reads, in one-letter code: Photosystem I assembly protein Ycf4 (183 aa).

The next 2 helical transmembrane spans lie at 23-43 and 64-84; these read WASV…SSYF and VMSF…LTII.

The protein belongs to the Ycf4 family.

The protein localises to the plastid. It is found in the chloroplast thylakoid membrane. In terms of biological role, seems to be required for the assembly of the photosystem I complex. This is Photosystem I assembly protein Ycf4 from Stigeoclonium helveticum (Green alga).